Consider the following 391-residue polypeptide: Phosphoglycerate kinase (391 aa).

Residues 21–23 (DLN), R36, 59–62 (HLGR), R113, and R146 each bind substrate. ATP contacts are provided by residues K197, E319, and 345–348 (GGDT).

This sequence belongs to the phosphoglycerate kinase family. In terms of assembly, monomer.

It is found in the cytoplasm. It catalyses the reaction (2R)-3-phosphoglycerate + ATP = (2R)-3-phospho-glyceroyl phosphate + ADP. It participates in carbohydrate degradation; glycolysis; pyruvate from D-glyceraldehyde 3-phosphate: step 2/5. The polypeptide is Phosphoglycerate kinase (Shewanella frigidimarina (strain NCIMB 400)).